Reading from the N-terminus, the 333-residue chain is Serine proteinase inhibitor 2 (333 aa).

This sequence belongs to the serpin family. Poxviruses subfamily.

The protein localises to the host cytoplasm. Weak inhibitor of the interleukin-1-beta converting enzyme (ICE) and of granzyme B. Does not form a stable complex with ICE, but can for a stable complex with granzyme B. The protein is Serine proteinase inhibitor 2 (SERP2) of Myxoma virus (strain Uriarra) (MYXV).